We begin with the raw amino-acid sequence, 634 residues long: Tyrosine-protein kinase transforming protein erbB (634 aa).

Residues 132 to 399 (FKKVKVLGSG…KMARDPPRYL (268 aa)) enclose the Protein kinase domain. Residues 138-146 (LGSGAFGTV) and K165 contribute to the ATP site. The active-site Proton acceptor is D257.

Belongs to the protein kinase superfamily. Tyr protein kinase family. EGF receptor subfamily.

The enzyme catalyses L-tyrosyl-[protein] + ATP = O-phospho-L-tyrosyl-[protein] + ADP + H(+). This Avian leukosis virus (ALV) protein is Tyrosine-protein kinase transforming protein erbB (V-ERBB).